A 369-amino-acid chain; its full sequence is Translocating chain-associated membrane protein 1-like 1 (369 aa).

Topologically, residues 1–29 (MGLRKKSTKNPPVLSQEFILQNHADIVSC) are cytoplasmic. Residues 30-50 (VGMFFLLGLVFEGTAEASIVF) traverse the membrane as a helical segment. Over 51–81 (LTLQHSVAVPAAEEQATGSKSLYYYGVKDLA) the chain is Lumenal. Residues 82–102 (TVFFYMLVAIIIHATIQEYVL) form a helical membrane-spanning segment. The Cytoplasmic segment spans residues 103–121 (DKINKRMQFTKAKQNKFNE). A TLC domain is found at 117 to 326 (NKFNESGQFS…TLWLQRWVED (210 aa)). Residues 122-142 (SGQFSVFYFFSCIWGTFILIS) traverse the membrane as a helical segment. Residues 143–164 (ENCLSDPTLIWKARPHSMMTFQ) lie on the Lumenal side of the membrane. Residues 165 to 185 (MKFFYISQLAYWFHAFPELYF) traverse the membrane as a helical segment. Residues 186-196 (QKTKKQDIPRQ) are Cytoplasmic-facing. Residues 197 to 215 (LVYIGLHLFHITGAYLLYL) form a helical membrane-spanning segment. Residues 216-219 (NHLG) lie on the Lumenal side of the membrane. The chain crosses the membrane as a helical span at residues 220 to 242 (LLLLVLHYFVELLSHMCGLFYFS). Residues 243 to 249 (DEKYQKG) lie on the Cytoplasmic side of the membrane. A helical transmembrane segment spans residues 250 to 270 (ISLWAIVFILGRLVTLIVSVL). At 271-297 (TVGFHLAGSQNRNPDALTGNVNVLAAK) the chain is on the lumenal side. The helical transmembrane segment at 298 to 318 (IAVLSSSCTIQAYVTWNLITL) threads the bilayer. Residues 319 to 369 (WLQRWVEDSNIQASCMKKKRSRSSKKRTENGVGVETSNRVDCPPKRKEKSS) lie on the Cytoplasmic side of the membrane. Residues 335–369 (KKKRSRSSKKRTENGVGVETSNRVDCPPKRKEKSS) form a disordered region. A compositionally biased stretch (basic and acidic residues) spans 360–369 (CPPKRKEKSS).

It belongs to the TRAM family.

The protein resides in the endoplasmic reticulum membrane. Functionally, stimulatory or required for the translocation of secretory proteins across the ER membrane. The chain is Translocating chain-associated membrane protein 1-like 1 (TRAM1L1) from Homo sapiens (Human).